The chain runs to 470 residues: Ribulose bisphosphate carboxylase large chain (470 aa).

Residues Asn118 and Thr168 each coordinate substrate. The active-site Proton acceptor is the Lys170. A substrate-binding site is contributed by Lys172. Residues Lys196, Asp198, and Glu199 each coordinate Mg(2+). Residue Lys196 is modified to N6-carboxylysine. The Proton acceptor role is filled by His289. The substrate site is built by Arg290, His322, and Ser374.

It belongs to the RuBisCO large chain family. Type I subfamily. Heterohexadecamer of 8 large chains and 8 small chains; disulfide-linked. The disulfide link is formed within the large subunit homodimers. RuBisCO interacts with the C-terminus of CcmM, and can be found in complexes that also include carbonic anhydrase (ccaA). RuBisCO associates with both the internal and shell portion of carboxysomes. Mg(2+) serves as cofactor. Post-translationally, the disulfide bond which can form in the large chain dimeric partners within the hexadecamer appears to be associated with oxidative stress and protein turnover.

The protein localises to the carboxysome. It catalyses the reaction 2 (2R)-3-phosphoglycerate + 2 H(+) = D-ribulose 1,5-bisphosphate + CO2 + H2O. It carries out the reaction D-ribulose 1,5-bisphosphate + O2 = 2-phosphoglycolate + (2R)-3-phosphoglycerate + 2 H(+). Its function is as follows. RuBisCO catalyzes two reactions: the carboxylation of D-ribulose 1,5-bisphosphate, the primary event in carbon dioxide fixation, as well as the oxidative fragmentation of the pentose substrate in the photorespiration process. Both reactions occur simultaneously and in competition at the same active site. The polypeptide is Ribulose bisphosphate carboxylase large chain (Synechocystis sp. (strain ATCC 27184 / PCC 6803 / Kazusa)).